Reading from the N-terminus, the 743-residue chain is Conserved oligomeric Golgi complex subunit 8 (743 aa).

2 disordered regions span residues 549-672 (EDGP…TEPE) and 704-743 (TQDD…KKDD). Composition is skewed to basic and acidic residues over residues 563-581 (ESVK…HGTD), 594-621 (PVKE…HETP), 633-647 (SEAK…HLEL), and 654-664 (QEIREQEHKEV). The segment covering 704–726 (TQDDPIEEEEGWGWGDDDGEEQE) has biased composition (acidic residues). Residues 727–743 (ISSKEVESPKEKCKKDD) show a composition bias toward basic and acidic residues.

It belongs to the COG8 family. Component of the conserved oligomeric Golgi complex which is composed of eight different subunits and is required for normal Golgi morphology and localization.

The protein localises to the golgi apparatus membrane. Required for normal Golgi function. The protein is Conserved oligomeric Golgi complex subunit 8 (cogc-8) of Caenorhabditis elegans.